Consider the following 413-residue polypeptide: Putative competence-damage inducible protein (413 aa).

Belongs to the CinA family.

The polypeptide is Putative competence-damage inducible protein (Acetivibrio thermocellus (strain ATCC 27405 / DSM 1237 / JCM 9322 / NBRC 103400 / NCIMB 10682 / NRRL B-4536 / VPI 7372) (Clostridium thermocellum)).